The sequence spans 108 residues: Large ribosomal subunit protein uL24 (108 aa).

This sequence belongs to the universal ribosomal protein uL24 family. In terms of assembly, part of the 50S ribosomal subunit.

In terms of biological role, one of two assembly initiator proteins, it binds directly to the 5'-end of the 23S rRNA, where it nucleates assembly of the 50S subunit. Functionally, one of the proteins that surrounds the polypeptide exit tunnel on the outside of the subunit. This chain is Large ribosomal subunit protein uL24, found in Mycoplasma genitalium (strain ATCC 33530 / DSM 19775 / NCTC 10195 / G37) (Mycoplasmoides genitalium).